A 240-amino-acid chain; its full sequence is Uridylate kinase (240 aa).

13–16 (KASG) contributes to the ATP binding site. Residues 21–26 (GSQGFG) are involved in allosteric activation by GTP. Gly55 provides a ligand contact to UMP. Gly56 and Arg60 together coordinate ATP. Residues Asp75 and 136 to 143 (TGNPFFTT) each bind UMP. Positions 163, 164, 169, and 172 each coordinate ATP.

It belongs to the UMP kinase family. As to quaternary structure, homohexamer.

The protein resides in the cytoplasm. The catalysed reaction is UMP + ATP = UDP + ADP. It participates in pyrimidine metabolism; CTP biosynthesis via de novo pathway; UDP from UMP (UMPK route): step 1/1. Allosterically activated by GTP. Inhibited by UTP. In terms of biological role, catalyzes the reversible phosphorylation of UMP to UDP. This is Uridylate kinase from Brucella anthropi (strain ATCC 49188 / DSM 6882 / CCUG 24695 / JCM 21032 / LMG 3331 / NBRC 15819 / NCTC 12168 / Alc 37) (Ochrobactrum anthropi).